An 835-amino-acid chain; its full sequence is Prickle-like protein 1-A (835 aa).

The region spanning 14 to 122 (FGCQRSSTSD…NIKMLSRAVM (109 aa)) is the PET domain. LIM zinc-binding domains follow at residues 124-188 (ATCE…ELLK), 189-249 (PRCS…HYAE), and 250-313 (YCES…EDVH). Disordered regions lie at residues 312–346 (VHAS…ADQC), 426–455 (LFQQ…QRNN), 603–706 (CQEK…RKRS), and 769–835 (CSSS…CIIS). Composition is skewed to basic and acidic residues over residues 432 to 453 (EDNR…DLQR), 603 to 614 (CQEKPPPEEKPM), and 646 to 655 (EIRRPPMSER). Basic residues-rich tracts occupy residues 669–683 (RPHH…KSRK) and 819–835 (SKSK…CIIS). Residue Cys-832 is modified to Cysteine methyl ester. A lipid anchor (S-farnesyl cysteine) is attached at Cys-832. A propeptide spans 833 to 835 (IIS) (removed in mature form).

This sequence belongs to the prickle / espinas / testin family. In terms of assembly, interacts with dvl2/dsh and mapk8/jnk1. In terms of tissue distribution, expressed in the dorsal marginal zone of early gastrulae (stage 10). As gastrulation proceeds, expression expands to include the lateral and ventral marginal zones, excluding the few rows of cells above the blastopore lip. Expression moves dorsally with gastrulation cell movements, and by the end of gastrulation expression is seen in dorsal mesoderm and posterior but not anterior neural ectoderm. Expression becomes down-regulated in mesoderm but remains strong in posterior ectoderm through the neurula stages. During tailbud stages, expressed in the pronephric duct, tailbud, tailtip and forming somites. In the most posterior regions, expressed in notochord and in the floorplate of the neural tube with weak expression in the roofplate. At stage 30, expressed in a complex pattern in the head including strong expression in the lens and otic vesicle.

It is found in the cell membrane. In terms of biological role, acts in a planar cell polarity (PCP) complex; polarization along the apical/basal axis of epithelial cells. Regulates the polarized assembly of fibronectrin on the surface of the mesoderm during gastrulation. Essential for gastrulation cell movements, cooperating with dvl2/dsh to activate jnk. Acts together with tes to control axial elongation. In Xenopus laevis (African clawed frog), this protein is Prickle-like protein 1-A (prickle1-a).